The sequence spans 303 residues: tRNA dimethylallyltransferase (303 aa).

10–17 (GPTASGKS) contacts ATP. 12 to 17 (TASGKS) is a substrate binding site. The tract at residues 35–38 (DSMQ) is interaction with substrate tRNA.

It belongs to the IPP transferase family. As to quaternary structure, monomer. Mg(2+) is required as a cofactor.

The catalysed reaction is adenosine(37) in tRNA + dimethylallyl diphosphate = N(6)-dimethylallyladenosine(37) in tRNA + diphosphate. In terms of biological role, catalyzes the transfer of a dimethylallyl group onto the adenine at position 37 in tRNAs that read codons beginning with uridine, leading to the formation of N6-(dimethylallyl)adenosine (i(6)A). This Methylobacterium nodulans (strain LMG 21967 / CNCM I-2342 / ORS 2060) protein is tRNA dimethylallyltransferase.